The primary structure comprises 178 residues: Large ribosomal subunit protein uL6 (178 aa).

This sequence belongs to the universal ribosomal protein uL6 family. As to quaternary structure, part of the 50S ribosomal subunit.

This protein binds to the 23S rRNA, and is important in its secondary structure. It is located near the subunit interface in the base of the L7/L12 stalk, and near the tRNA binding site of the peptidyltransferase center. This Leifsonia xyli subsp. xyli (strain CTCB07) protein is Large ribosomal subunit protein uL6.